The chain runs to 95 residues: Transcription and mRNA export factor ENY2-1 (95 aa).

It belongs to the ENY2 family. In terms of assembly, component of the nuclear pore complex (NPC)-associated TREX-2 complex (transcription and export complex 2). Component of the SAGA transcription coactivator-HAT complex. Within the SAGA complex, participates in a subcomplex of SAGA called the DUB module (deubiquitination module).

It is found in the nucleus. It localises to the nucleoplasm. Involved in mRNA export coupled transcription activation by association with both the TREX-2 and the SAGA complexes. The transcription regulatory histone acetylation (HAT) complex SAGA is a multiprotein complex that activates transcription by remodeling chromatin and mediating histone acetylation and deubiquitination. Within the SAGA complex, participates in a subcomplex that specifically deubiquitinates histones. The SAGA complex is recruited to specific gene promoters by activators, where it is required for transcription. The TREX-2 complex functions in docking export-competent ribonucleoprotein particles (mRNPs) to the nuclear entrance of the nuclear pore complex (nuclear basket). TREX-2 participates in mRNA export and accurate chromatin positioning in the nucleus by tethering genes to the nuclear periphery. The sequence is that of Transcription and mRNA export factor ENY2-1 (eny2-1) from Salmo salar (Atlantic salmon).